We begin with the raw amino-acid sequence, 391 residues long: Na(+)/H(+) antiporter NhaA 1 (391 aa).

Transmembrane regions (helical) follow at residues 25–45, 56–76, 98–118, 128–148, 157–177, 180–200, 208–228, 264–284, 297–317, 335–355, and 364–384; these read AGGI…NSPL, VWLG…IFFL, ALPG…YIAI, GWAI…SLLG, VFLA…IAFF, AGLN…LIVM, LLPY…SGVH, VAFA…LAGI, VALG…VLAI, GVAM…NLAF, and EVKV…IVLL.

This sequence belongs to the NhaA Na(+)/H(+) (TC 2.A.33) antiporter family.

It localises to the cell inner membrane. It catalyses the reaction Na(+)(in) + 2 H(+)(out) = Na(+)(out) + 2 H(+)(in). Functionally, na(+)/H(+) antiporter that extrudes sodium in exchange for external protons. In Pseudomonas syringae pv. syringae (strain B728a), this protein is Na(+)/H(+) antiporter NhaA 1.